Here is a 114-residue protein sequence, read N- to C-terminus: UPF0342 protein OEOE_0901 (114 aa).

It belongs to the UPF0342 family.

The polypeptide is UPF0342 protein OEOE_0901 (Oenococcus oeni (strain ATCC BAA-331 / PSU-1)).